The primary structure comprises 60 residues: Large ribosomal subunit protein uL30 (60 aa).

The protein belongs to the universal ribosomal protein uL30 family. In terms of assembly, part of the 50S ribosomal subunit.

The chain is Large ribosomal subunit protein uL30 from Desulfotalea psychrophila (strain LSv54 / DSM 12343).